Here is a 51-residue protein sequence, read N- to C-terminus: UPF0181 protein VV2_0310 (51 aa).

This sequence belongs to the UPF0181 family.

The protein is UPF0181 protein VV2_0310 of Vibrio vulnificus (strain CMCP6).